A 300-amino-acid polypeptide reads, in one-letter code: 4-hydroxy-tetrahydrodipicolinate synthase (300 aa).

Threonine 55 contributes to the pyruvate binding site. Tyrosine 143 acts as the Proton donor/acceptor in catalysis. Residue lysine 171 is the Schiff-base intermediate with substrate of the active site. Isoleucine 211 serves as a coordination point for pyruvate.

This sequence belongs to the DapA family. As to quaternary structure, homotetramer; dimer of dimers.

The protein resides in the cytoplasm. It carries out the reaction L-aspartate 4-semialdehyde + pyruvate = (2S,4S)-4-hydroxy-2,3,4,5-tetrahydrodipicolinate + H2O + H(+). Its pathway is amino-acid biosynthesis; L-lysine biosynthesis via DAP pathway; (S)-tetrahydrodipicolinate from L-aspartate: step 3/4. Its function is as follows. Catalyzes the condensation of (S)-aspartate-beta-semialdehyde [(S)-ASA] and pyruvate to 4-hydroxy-tetrahydrodipicolinate (HTPA). This Mycolicibacterium paratuberculosis (strain ATCC BAA-968 / K-10) (Mycobacterium paratuberculosis) protein is 4-hydroxy-tetrahydrodipicolinate synthase.